Consider the following 430-residue polypeptide: C4-dicarboxylate transport protein (430 aa).

9 helical membrane passes run 8–28 (SLYFQVLAAITIGILLGHFYP), 44–64 (LIKMIIAPVIFCTVVTGIAGM), 76–96 (AALLYFEVVSTIALIIGLVVV), 144–164 (AFASGNILQVLLFAVMFGFAL), 184–204 (VIFGVINMIMKLAPLGAFGAM), 222–242 (LILCFYLTCILFVFLVLGSIA), 289–309 (VVGLVIPTGYSFNLDGTSIYL), 326–346 (IWHQITLLVVLLLSSKGAAGV), and 352–372 (IVLAATLSAVGHLPVAGLALI).

The protein belongs to the dicarboxylate/amino acid:cation symporter (DAACS) (TC 2.A.23) family.

The protein resides in the cell inner membrane. Functionally, responsible for the transport of dicarboxylates such as succinate, fumarate, and malate from the periplasm across the membrane. This Pectobacterium atrosepticum (strain SCRI 1043 / ATCC BAA-672) (Erwinia carotovora subsp. atroseptica) protein is C4-dicarboxylate transport protein.